A 356-amino-acid polypeptide reads, in one-letter code: Cyclin-dependent kinase 5 activator 1 (356 aa).

2 disordered regions span residues 1–53 (MGAN…AKES) and 66–99 (IQPV…FTRN). 2 stretches are compositionally biased toward low complexity: residues 40–49 (SNTSSRSSSN) and 71–92 (SRRS…SSDS).

The protein belongs to the cyclin-dependent kinase 5 activator family. In terms of assembly, heterodimer composed of a catalytic subunit cdk-5 and a regulatory subunit cdka-1. Interaction with cdka-1 is required for cdk-5 activation. As to expression, expressed in all classes of neurons in the ventral cord.

It localises to the cytoplasm. Its subcellular location is the cell projection. It is found in the dendrite. The protein resides in the axon. Its function is as follows. Activator of the kinase cdk-5. In several motor neurons, promotes the polarized trafficking of synaptic vesicles and dense-core vesicles. In the ventral nerve cord, regulates the synaptic localization of the glutamate receptor, glr-1. In DA motor neurons, regulates axonal transport of synaptic vesicle precursors by inhibiting dynein-mediated retrograde transport. Regulates the polarized distribution of dense-core vesicles in DB motor neurons. May regulate these processes in association with cdk-5. May also play a role in GABAergic synaptic vesicle localization in the ventral nerve cord. In Caenorhabditis elegans, this protein is Cyclin-dependent kinase 5 activator 1.